The sequence spans 377 residues: Queuine tRNA-ribosyltransferase (377 aa).

The active-site Proton acceptor is D92. Substrate-binding positions include 92-96 (DSGGF), D146, Q190, and G217. The tract at residues 248–254 (GVGRPED) is RNA binding. Residue D267 is the Nucleophile of the active site. The interval 272–276 (TRHAR) is RNA binding; important for wobble base 34 recognition. Residues C305, C307, C310, and H337 each coordinate Zn(2+).

The protein belongs to the queuine tRNA-ribosyltransferase family. In terms of assembly, homodimer. Within each dimer, one monomer is responsible for RNA recognition and catalysis, while the other monomer binds to the replacement base PreQ1. Zn(2+) is required as a cofactor.

The catalysed reaction is 7-aminomethyl-7-carbaguanine + guanosine(34) in tRNA = 7-aminomethyl-7-carbaguanosine(34) in tRNA + guanine. It functions in the pathway tRNA modification; tRNA-queuosine biosynthesis. In terms of biological role, catalyzes the base-exchange of a guanine (G) residue with the queuine precursor 7-aminomethyl-7-deazaguanine (PreQ1) at position 34 (anticodon wobble position) in tRNAs with GU(N) anticodons (tRNA-Asp, -Asn, -His and -Tyr). Catalysis occurs through a double-displacement mechanism. The nucleophile active site attacks the C1' of nucleotide 34 to detach the guanine base from the RNA, forming a covalent enzyme-RNA intermediate. The proton acceptor active site deprotonates the incoming PreQ1, allowing a nucleophilic attack on the C1' of the ribose to form the product. After dissociation, two additional enzymatic reactions on the tRNA convert PreQ1 to queuine (Q), resulting in the hypermodified nucleoside queuosine (7-(((4,5-cis-dihydroxy-2-cyclopenten-1-yl)amino)methyl)-7-deazaguanosine). This Xylella fastidiosa (strain Temecula1 / ATCC 700964) protein is Queuine tRNA-ribosyltransferase.